We begin with the raw amino-acid sequence, 101 residues long: Large ribosomal subunit protein uL23 (101 aa).

This sequence belongs to the universal ribosomal protein uL23 family. In terms of assembly, part of the 50S ribosomal subunit. Contacts protein L29, and trigger factor when it is bound to the ribosome.

Functionally, one of the early assembly proteins it binds 23S rRNA. One of the proteins that surrounds the polypeptide exit tunnel on the outside of the ribosome. Forms the main docking site for trigger factor binding to the ribosome. This chain is Large ribosomal subunit protein uL23, found in Paenarthrobacter aurescens (strain TC1).